Consider the following 69-residue polypeptide: Guanine nucleotide-binding protein G(I)/G(S)/G(O) subunit gamma-T2 (69 aa).

C66 bears the Cysteine methyl ester mark. A lipid anchor (S-farnesyl cysteine) is attached at C66. Residues 67–69 (IIS) constitute a propeptide, removed in mature form.

This sequence belongs to the G protein gamma family. G proteins are composed of 3 units, alpha, beta and gamma.

The protein localises to the cell membrane. Guanine nucleotide-binding proteins (G proteins) are involved as a modulator or transducer in various transmembrane signaling systems. The beta and gamma chains are required for the GTPase activity, for replacement of GDP by GTP, and for G protein-effector interaction. The chain is Guanine nucleotide-binding protein G(I)/G(S)/G(O) subunit gamma-T2 (GNGT2) from Bos taurus (Bovine).